Here is a 415-residue protein sequence, read N- to C-terminus: Elongation factor 1-gamma 1 (415 aa).

Serine 2 carries the N-acetylserine modification. The GST N-terminal domain maps to 2–78; it reads SQGTLYANFR…YLVKLSQDDK (77 aa). Threonine 32 carries the post-translational modification Phosphothreonine. The region spanning 89–215 is the GST C-terminal domain; sequence DLNAQAQIIR…KDFKFADKPL (127 aa). Residues 212–256 are disordered; sequence DKPLSPPQKKKEKKAPAAAPAASKKKEEAKPAATETETSSKKPKH. Positions 254–415 constitute an EF-1-gamma C-terminal domain; the sequence is PKHPLELLGK…KEIVDGKVLK (162 aa).

As to quaternary structure, the eukaryotic elongation factor 1 complex (eEF1) is probably a heterohexamer. Two trimeric complexes, each composed of eEF1A (TEF1 or TEF2), eEF1Balpha (EFB1) and eEF1Bgamma (CAM1 or TEF4), are probably dimerized via the eF1Bgamma subunits. The eEF1B subcomplex with the GEF activity is formed of eEF1Balpha and eEF1Bgamma. CAM1 interacts with EFB1. Component of a complex bound to MXR1 promoter region.

The protein localises to the cytoplasm. It localises to the nucleus. It functions in the pathway protein biosynthesis; polypeptide chain elongation. Subunit of the eukaryotic elongation factor 1 complex (eEF1). Probably plays a role in anchoring the complex to other cellular components. May be involved in transcriptional regulation of MXR1. In Saccharomyces cerevisiae (strain ATCC 204508 / S288c) (Baker's yeast), this protein is Elongation factor 1-gamma 1 (CAM1).